A 662-amino-acid polypeptide reads, in one-letter code: DNA topoisomerase 4 subunit B (662 aa).

Residues Tyr-20, Asn-60, Asp-87, 129 to 135, and Lys-359 contribute to the ATP site; that span reads GLHGVGI. The region spanning 439–553 is the Toprim domain; it reads TELFIVEGDS…EGHLYLAKPP (115 aa). Mg(2+)-binding residues include Glu-445, Asp-518, and Asp-520.

It belongs to the type II topoisomerase family. ParE type 1 subfamily. Heterotetramer composed of ParC and ParE. It depends on Mg(2+) as a cofactor. Requires Mn(2+) as cofactor. Ca(2+) serves as cofactor.

The catalysed reaction is ATP-dependent breakage, passage and rejoining of double-stranded DNA.. Functionally, topoisomerase IV is essential for chromosome segregation. It relaxes supercoiled DNA. Performs the decatenation events required during the replication of a circular DNA molecule. This chain is DNA topoisomerase 4 subunit B, found in Rickettsia felis (strain ATCC VR-1525 / URRWXCal2) (Rickettsia azadi).